The primary structure comprises 330 residues: Glycoprotein integral membrane protein 1 (330 aa).

Residues 1–23 (MEGAPLGPLALRLLLFVALPASG) form the signal peptide. Topologically, residues 24–268 (WLTTGAPEPP…VFPVFFQFLN (245 aa)) are extracellular. N-linked (GlcNAc...) asparagine glycans are attached at residues N46, N64, N166, and N191. A helical transmembrane segment spans residues 269–289 (IMVVGITGAAVVITILKVLFP). The Cytoplasmic segment spans residues 290-330 (VSEYKGILQLDKVDVIPVTAINLYPDGPEKTAENLEDKTCI).

The protein localises to the membrane. This Pongo abelii (Sumatran orangutan) protein is Glycoprotein integral membrane protein 1 (GINM1).